The primary structure comprises 230 residues: Sugar fermentation stimulation protein homolog (230 aa).

This sequence belongs to the SfsA family.

The sequence is that of Sugar fermentation stimulation protein homolog from Clostridium tetani (strain Massachusetts / E88).